Consider the following 206-residue polypeptide: Large ribosomal subunit protein eL13 (206 aa).

A compositionally biased stretch (basic and acidic residues) spans 184–193; that stretch reads EKTNQKWDGK. A disordered region spans residues 184-206; sequence EKTNQKWDGKRKAKAQAAAEPKA.

The protein belongs to the eukaryotic ribosomal protein eL13 family.

The chain is Large ribosomal subunit protein eL13 (RPL13) from Tetrahymena thermophila (strain SB210).